The chain runs to 398 residues: Arginine biosynthesis bifunctional protein ArgJ (398 aa).

Residues threonine 148, lysine 174, threonine 185, glutamate 271, asparagine 393, and threonine 398 each coordinate substrate. Threonine 185 functions as the Nucleophile in the catalytic mechanism.

The protein belongs to the ArgJ family. Heterotetramer of two alpha and two beta chains.

It localises to the cytoplasm. It catalyses the reaction N(2)-acetyl-L-ornithine + L-glutamate = N-acetyl-L-glutamate + L-ornithine. It carries out the reaction L-glutamate + acetyl-CoA = N-acetyl-L-glutamate + CoA + H(+). It functions in the pathway amino-acid biosynthesis; L-arginine biosynthesis; L-ornithine and N-acetyl-L-glutamate from L-glutamate and N(2)-acetyl-L-ornithine (cyclic): step 1/1. Its pathway is amino-acid biosynthesis; L-arginine biosynthesis; N(2)-acetyl-L-ornithine from L-glutamate: step 1/4. In terms of biological role, catalyzes two activities which are involved in the cyclic version of arginine biosynthesis: the synthesis of N-acetylglutamate from glutamate and acetyl-CoA as the acetyl donor, and of ornithine by transacetylation between N(2)-acetylornithine and glutamate. This is Arginine biosynthesis bifunctional protein ArgJ from Listeria monocytogenes serotype 4b (strain F2365).